The following is a 217-amino-acid chain: 7-cyano-7-deazaguanine synthase (217 aa).

10–20 is a binding site for ATP; the sequence is FSGGQDSTTCL. Residues Cys185, Cys194, Cys197, and Cys200 each contribute to the Zn(2+) site.

It belongs to the QueC family. In terms of assembly, homodimer. It depends on Zn(2+) as a cofactor.

The enzyme catalyses 7-carboxy-7-deazaguanine + NH4(+) + ATP = 7-cyano-7-deazaguanine + ADP + phosphate + H2O + H(+). It functions in the pathway purine metabolism; 7-cyano-7-deazaguanine biosynthesis. Catalyzes the ATP-dependent conversion of 7-carboxy-7-deazaguanine (CDG) to 7-cyano-7-deazaguanine (preQ(0)). This Streptococcus thermophilus (strain CNRZ 1066) protein is 7-cyano-7-deazaguanine synthase.